The primary structure comprises 130 residues: MSMQDPIADMLTRIRNGQAANHVSVKMPSAKLKVAIAKLLKDEGYIADYAVADEAKPELEVTLKYFQGQPVVETIQRVSRPGLRIYKGKNELPKVMGGLGVAIVSTSKGLMTDRAARLAGMGGEVICYVA.

This sequence belongs to the universal ribosomal protein uS8 family. Part of the 30S ribosomal subunit. Contacts proteins S5 and S12.

In terms of biological role, one of the primary rRNA binding proteins, it binds directly to 16S rRNA central domain where it helps coordinate assembly of the platform of the 30S subunit. This is Small ribosomal subunit protein uS8 from Shewanella baltica (strain OS223).